A 136-amino-acid polypeptide reads, in one-letter code: Evasin P991 (136 aa).

The signal sequence occupies residues 1-28 (MHSTIVYACLLALAVFVALHGTPLAALA). Residues Asn41, Asn61, Asn64, Asn78, Asn92, Asn100, and Asn122 are each glycosylated (N-linked (GlcNAc...) asparagine). Cystine bridges form between Cys55–Cys77, Cys73–Cys114, Cys90–Cys119, and Cys109–Cys128.

It localises to the secreted. Salivary chemokine-binding protein which has chemokine-neutralizing activity and binds to host chemokines CCL2, CCL3, CCL3L1, CCL4, CCL4L1, CCL5, CCL6, CCL7, CCL8, CCL9, CCL11, CCL12, CCL13, CCL14, CCL16, CCL17, CCL18, CCL19, CCL22, CCL23, CCL24 and CCL27. The protein is Evasin P991 of Amblyomma cajennense (Cayenne tick).